The sequence spans 296 residues: ATP synthase gamma chain (296 aa).

The segment at 194–216 (IPASAGQAANDNAGSDQPAGDYE) is disordered.

Belongs to the ATPase gamma chain family. As to quaternary structure, F-type ATPases have 2 components, CF(1) - the catalytic core - and CF(0) - the membrane proton channel. CF(1) has five subunits: alpha(3), beta(3), gamma(1), delta(1), epsilon(1). CF(0) has three main subunits: a, b and c.

The protein resides in the cell inner membrane. In terms of biological role, produces ATP from ADP in the presence of a proton gradient across the membrane. The gamma chain is believed to be important in regulating ATPase activity and the flow of protons through the CF(0) complex. The polypeptide is ATP synthase gamma chain (Acidiphilium cryptum (strain JF-5)).